The sequence spans 144 residues: 3-dehydroquinate dehydratase (144 aa).

Catalysis depends on Y24, which acts as the Proton acceptor. Substrate is bound by residues N73, H79, and D86. Residue H99 is the Proton donor of the active site. Residues 100–101 and R110 contribute to the substrate site; that span reads LS.

The protein belongs to the type-II 3-dehydroquinase family. In terms of assembly, homododecamer.

It carries out the reaction 3-dehydroquinate = 3-dehydroshikimate + H2O. The protein operates within metabolic intermediate biosynthesis; chorismate biosynthesis; chorismate from D-erythrose 4-phosphate and phosphoenolpyruvate: step 3/7. Its function is as follows. Catalyzes a trans-dehydration via an enolate intermediate. The polypeptide is 3-dehydroquinate dehydratase (Shewanella putrefaciens (strain CN-32 / ATCC BAA-453)).